The sequence spans 131 residues: L-ectoine synthase (131 aa).

The protein belongs to the ectoine synthase family.

It carries out the reaction (2S)-4-acetamido-2-aminobutanoate = L-ectoine + H2O. Its pathway is amine and polyamine biosynthesis; ectoine biosynthesis; L-ectoine from L-aspartate 4-semialdehyde: step 3/3. In terms of biological role, catalyzes the circularization of gamma-N-acetyl-alpha,gamma-diaminobutyric acid (ADABA) to ectoine (1,4,5,6-tetrahydro-2-methyl-4-pyrimidine carboxylic acid), which is an excellent osmoprotectant. This chain is L-ectoine synthase, found in Wolinella succinogenes (strain ATCC 29543 / DSM 1740 / CCUG 13145 / JCM 31913 / LMG 7466 / NCTC 11488 / FDC 602W) (Vibrio succinogenes).